The chain runs to 698 residues: PWWP domain-containing DNA repair factor 3A (698 aa).

Disordered regions lie at residues 102 to 145 and 159 to 386; these read TSLS…EDDQ and CSPK…EEPP. Position 105 is a phosphoserine (Ser-105). Over residues 129 to 139 the composition is skewed to polar residues; sequence SQVSSAPSPSF. A phosphoserine mark is found at Ser-165, Ser-168, and Ser-170. The segment covering 200-211 has biased composition (polar residues); that stretch reads DESQNGSGSQLD. Composition is skewed to basic and acidic residues over residues 212-235 and 341-350; these read HGQE…RGKA and RAGDSDRPEE. Ser-355 and Ser-356 each carry phosphoserine. The span at 370 to 384 shows a compositional bias: acidic residues; sequence EEEEEEEEEEEEEEE. Residues 399–460 enclose the PWWP domain; it reads VGMLVWLKYQ…KHFDCKEKHA (62 aa).

It belongs to the PWWP3A family. As to quaternary structure, interacts with TP53BP1 (via BRCT domain); the interaction is not dependent on its phosphorylation status. Binds nucleosomes. Interacts with trimethylated 'Lys-36' of histone H3 (H3K36me3) (in vitro).

Its subcellular location is the nucleus. Functionally, involved in the DNA damage response pathway by contributing to the maintenance of chromatin architecture. Recruited to the vicinity of DNA breaks by TP53BP1 and plays an accessory role to facilitate damage-induced chromatin changes and promoting chromatin relaxation. Required for efficient DNA repair and cell survival following DNA damage. The protein is PWWP domain-containing DNA repair factor 3A of Rattus norvegicus (Rat).